The chain runs to 453 residues: uncharacterized protein (453 aa).

The 59-residue stretch at 5–63 (LLKKNQSVELTIEDLTHDGSGVGKIDGYPLFIPNALPGEKITAKITKLNKNYGFARMEN) folds into the TRAM domain. The [4Fe-4S] cluster site is built by C76, C82, C85, and C162. Q285, Y314, E335, and D383 together coordinate S-adenosyl-L-methionine. C410 (nucleophile) is an active-site residue.

The protein belongs to the class I-like SAM-binding methyltransferase superfamily. RNA M5U methyltransferase family.

This is an uncharacterized protein from Listeria innocua serovar 6a (strain ATCC BAA-680 / CLIP 11262).